The chain runs to 388 residues: Valine--pyruvate aminotransferase (388 aa).

N6-(pyridoxal phosphate)lysine is present on lysine 234.

Belongs to the class-I pyridoxal-phosphate-dependent aminotransferase family. The cofactor is pyridoxal 5'-phosphate.

The catalysed reaction is L-valine + pyruvate = 3-methyl-2-oxobutanoate + L-alanine. The chain is Valine--pyruvate aminotransferase from Mycobacterium tuberculosis (strain ATCC 25618 / H37Rv).